The primary structure comprises 256 residues: Short-chain dehydrogenase/reductase cdmF (256 aa).

V11, D57, and R119 together coordinate NADP(+). The active-site Proton donor is the S137. NADP(+) contacts are provided by Y151, K155, G183, and N187. Y151 acts as the Proton acceptor in catalysis. K155 acts as the Lowers pKa of active site Tyr in catalysis.

This sequence belongs to the short-chain dehydrogenases/reductases (SDR) family.

The enzyme catalyses 3-hydroxypentacecilide A + A = chrodrimanin C + AH2. It catalyses the reaction chrodrimanin F + A = chrodrimanin H + AH2. Its pathway is secondary metabolite biosynthesis; terpenoid biosynthesis. Short-chain dehydrogenase/reductase; part of the gene cluster that mediates the biosynthesis of chrodrimanin B, a meroterpenoid that acts as a potent blocker of insect GABA-gated chloride channels. The first step of the pathway is the biosynthesis of 6-hydroxymellein by the polyketide synthase cdmE. The prenyltransferase cdmH acts as a 6-hydroxymellein 5-farnesyltransferase and produces the hydrophobic metabolite verruculide C. The FAD-dependent monooxygenase cdmI further converts verruculide C into verruculide B. The terpene cyclase cdmG then produced the pentacyclic molecule 3-hydroxypentacecilide A, the backbone structure of chrodrimanin B, via folding the farnesyl moiety of the substrate into the chair-boat conformation. The short-chain dehydrogenase/reductase cdmF functions as the 3-OH dehydrogenase that oxidizes the C-3 hydroxyl group of 3-hydroxypentacecilide A and produces chrodrimanin C, the dehydrogenated product of 3-hydroxypentacecilide A. The cytochrome P450 monooxygenase cdmJ then accepts both 3-hydroxypentacecilide A and chrodrimanin C and functions as a C-7-beta-hydroxylase to produce respectively chrodrimanin H and chrodrimanin F. The dioxygenase cdmA accepts chrodrimanin H to afford chrodrimanin E, which is further transformed to chrodrimanin A by the dioxygenase cdmD. CdmA can also accept chrodrimanin C as substrate to convert it into verruculide A, which is further converted into chrodrimanin T by cdmD. The last step of the biosynthesis is proposed to be performed by the acetyltransferase cdmC which acetylates chrodrimanin A to yield chrodrimanin B. The pathway may also lead to the production of additional shunt products, including chrodrimanins T and U. This is Short-chain dehydrogenase/reductase cdmF from Talaromyces verruculosus (Penicillium verruculosum).